Reading from the N-terminus, the 253-residue chain is Transmembrane protein 69 (253 aa).

The next 5 helical transmembrane spans lie at 104–124, 137–157, 165–185, 192–212, and 223–243; these read ALYLGLAGLIPFVSAPLLMNV, VAYGASILSFLGGVRWGFAIP, DWMNLTNSTVPALLAWLALLF, AAVLVIMGLGIALHYDLALLP, and AILTVVAVFSLVGSLINSSVY.

The protein resides in the membrane. In Xenopus tropicalis (Western clawed frog), this protein is Transmembrane protein 69 (tmem69).